We begin with the raw amino-acid sequence, 573 residues long: Proline--tRNA ligase (573 aa).

Belongs to the class-II aminoacyl-tRNA synthetase family. ProS type 1 subfamily. Homodimer.

Its subcellular location is the cytoplasm. The catalysed reaction is tRNA(Pro) + L-proline + ATP = L-prolyl-tRNA(Pro) + AMP + diphosphate. Catalyzes the attachment of proline to tRNA(Pro) in a two-step reaction: proline is first activated by ATP to form Pro-AMP and then transferred to the acceptor end of tRNA(Pro). As ProRS can inadvertently accommodate and process non-cognate amino acids such as alanine and cysteine, to avoid such errors it has two additional distinct editing activities against alanine. One activity is designated as 'pretransfer' editing and involves the tRNA(Pro)-independent hydrolysis of activated Ala-AMP. The other activity is designated 'posttransfer' editing and involves deacylation of mischarged Ala-tRNA(Pro). The misacylated Cys-tRNA(Pro) is not edited by ProRS. The chain is Proline--tRNA ligase from Caldanaerobacter subterraneus subsp. tengcongensis (strain DSM 15242 / JCM 11007 / NBRC 100824 / MB4) (Thermoanaerobacter tengcongensis).